The following is a 93-amino-acid chain: Small ribosomal subunit protein uS19 (93 aa).

It belongs to the universal ribosomal protein uS19 family.

In terms of biological role, protein S19 forms a complex with S13 that binds strongly to the 16S ribosomal RNA. The sequence is that of Small ribosomal subunit protein uS19 from Nitratidesulfovibrio vulgaris (strain ATCC 29579 / DSM 644 / CCUG 34227 / NCIMB 8303 / VKM B-1760 / Hildenborough) (Desulfovibrio vulgaris).